The sequence spans 359 residues: GDSL esterase/lipase At2g30310 (359 aa).

Residues 1–28 form the signal peptide; that stretch reads MSTSKTIVFGLFVATLLVSCNVAANATT. Ser-41 functions as the Nucleophile in the catalytic mechanism. Residues Asn-103 and Asn-325 are each glycosylated (N-linked (GlcNAc...) asparagine). Catalysis depends on residues Asp-333 and His-336.

Belongs to the 'GDSL' lipolytic enzyme family.

The protein localises to the secreted. This chain is GDSL esterase/lipase At2g30310, found in Arabidopsis thaliana (Mouse-ear cress).